Reading from the N-terminus, the 426-residue chain is Histidine--tRNA ligase (426 aa).

Belongs to the class-II aminoacyl-tRNA synthetase family.

The protein localises to the cytoplasm. It catalyses the reaction tRNA(His) + L-histidine + ATP = L-histidyl-tRNA(His) + AMP + diphosphate + H(+). The polypeptide is Histidine--tRNA ligase (Saccharolobus solfataricus (strain ATCC 35092 / DSM 1617 / JCM 11322 / P2) (Sulfolobus solfataricus)).